Here is a 317-residue protein sequence, read N- to C-terminus: Electron transfer flavoprotein subunit alpha (317 aa).

Belongs to the ETF alpha-subunit/FixB family. In terms of assembly, heterodimer of an alpha and a beta subunit. FAD serves as cofactor.

The protein resides in the cytoplasm. The protein operates within lipid metabolism; butanoate metabolism. Part of an electron transfer flavoprotein involved in syntrophic growth of S.wolfei with butyrate. Probably receives electrons from butyryl-CoA dehydrogenases, and transfers them to the membrane-bound quinone oxidoreductase Swol_0698. The polypeptide is Electron transfer flavoprotein subunit alpha (Syntrophomonas wolfei subsp. wolfei (strain DSM 2245B / Goettingen)).